The chain runs to 390 residues: Phosphopentomutase (390 aa).

Residues Asp-10, Asp-282, His-287, Asp-323, His-324, and His-335 each coordinate Mn(2+).

The protein belongs to the phosphopentomutase family. Mn(2+) serves as cofactor.

Its subcellular location is the cytoplasm. It carries out the reaction 2-deoxy-alpha-D-ribose 1-phosphate = 2-deoxy-D-ribose 5-phosphate. The enzyme catalyses alpha-D-ribose 1-phosphate = D-ribose 5-phosphate. The protein operates within carbohydrate degradation; 2-deoxy-D-ribose 1-phosphate degradation; D-glyceraldehyde 3-phosphate and acetaldehyde from 2-deoxy-alpha-D-ribose 1-phosphate: step 1/2. Isomerase that catalyzes the conversion of deoxy-ribose 1-phosphate (dRib-1-P) and ribose 1-phosphate (Rib-1-P) to deoxy-ribose 5-phosphate (dRib-5-P) and ribose 5-phosphate (Rib-5-P), respectively. This Lachnoclostridium phytofermentans (strain ATCC 700394 / DSM 18823 / ISDg) (Clostridium phytofermentans) protein is Phosphopentomutase.